Here is a 323-residue protein sequence, read N- to C-terminus: Zinc finger protein 784 (323 aa).

The tract at residues 1-26 is disordered; it reads MAAARPEAQSRSSPTPESRSQEPLDL. Residues 9–18 are compositionally biased toward polar residues; the sequence is QSRSSPTPES. Ser13 bears the Phosphoserine mark. 6 C2H2-type zinc fingers span residues 65 to 87, 101 to 123, 129 to 151, 196 to 218, 224 to 246, and 252 to 274; these read FHCA…EHGH, SRCH…YSLH, YRCA…QHRH, FACR…ERVH, YHCG…ARIH, and FRCT…QRTH. Residues 269–323 form a disordered region; sequence KHQRTHFHGPGPGLGDSGGQLGSSAAEGSGSGCGVGDPAEEGRGETAKVKVEADQ. Residues 278–289 are compositionally biased toward gly residues; the sequence is PGPGLGDSGGQL. Positions 308–323 are enriched in basic and acidic residues; that stretch reads EEGRGETAKVKVEADQ. A Glycyl lysine isopeptide (Lys-Gly) (interchain with G-Cter in SUMO2) cross-link involves residue Lys318.

The protein belongs to the krueppel C2H2-type zinc-finger protein family.

The protein resides in the nucleus. Its function is as follows. May be involved in transcriptional regulation. The polypeptide is Zinc finger protein 784 (ZNF784) (Homo sapiens (Human)).